Consider the following 155-residue polypeptide: Secreted RxLR effector protein 38 (155 aa).

Positions 1-17 (MHLIYIVMAATATTLHA) are cleaved as a signal peptide. Residues 49-64 (RFLRGAYEDVHREEER) carry the RxLR-dEER motif.

It belongs to the RxLR effector family.

It is found in the secreted. The protein resides in the host nucleus. The protein localises to the host cytoplasm. Functionally, secreted effector that completely suppresses the host cell death induced by cell death-inducing proteins. This chain is Secreted RxLR effector protein 38, found in Plasmopara viticola (Downy mildew of grapevine).